A 602-amino-acid chain; its full sequence is Sodium- and chloride-dependent GABA transporter 2 (602 aa).

Over 1–40 (MDNRVSGTTSNGETKPVCPVMEKVEEDGTLEREQWTNKME) the chain is Cytoplasmic. 3 consecutive transmembrane segments (helical) span residues 41 to 61 (FVLS…FPYL), 68 to 88 (GAFF…VFFL), and 121 to 141 (IVSL…FYLF). The Extracellular portion of the chain corresponds to 142–206 (SSFTTDLPWG…GIQHLGSLRW (65 aa)). The cysteines at positions 153 and 162 are disulfide-linked. N-linked (GlcNAc...) asparagine glycans are attached at residues Asn169, Asn173, and Asn178. 2 consecutive transmembrane segments (helical) span residues 207–227 (ELVL…WKGV) and 233–253 (VVYF…IRGV). N-linked (GlcNAc...) asparagine glycosylation occurs at Asn269. 7 helical membrane passes run 282–302 (AGTQ…ALGS), 319–339 (ILNS…LGFM), 366–386 (VVML…VVLL), 418–438 (ILIL…LTEG), 453–473 (GMCL…VYGA), 490–510 (PLIK…TFLF), and 528–548 (WWGD…IPAW). Topologically, residues 549-602 (SIYKLRTLKGPLRERLRQLVCPAEDLPQKSQPELTSPATPMTSLLRLTELESNC) are cytoplasmic. Thr587 is modified (phosphothreonine). Phosphoserine is present on Ser591.

This sequence belongs to the sodium:neurotransmitter symporter (SNF) (TC 2.A.22) family. SLC6A13 subfamily. Brain, retina, and peripheral tissues. Expressed in hepatocytes (at protein level).

The protein localises to the cell membrane. The protein resides in the basolateral cell membrane. It catalyses the reaction 4-aminobutanoate(out) + chloride(out) + 2 Na(+)(out) = 4-aminobutanoate(in) + chloride(in) + 2 Na(+)(in). It carries out the reaction taurine(out) + chloride(out) + 2 Na(+)(out) = taurine(in) + chloride(in) + 2 Na(+)(in). The catalysed reaction is beta-alanine(out) + chloride(out) + 2 Na(+)(out) = beta-alanine(in) + chloride(in) + 2 Na(+)(in). The enzyme catalyses hypotaurine(out) + chloride(out) + 2 Na(+)(out) = hypotaurine(in) + chloride(in) + 2 Na(+)(in). With respect to regulation, GABA transport is inhibited by beta-alanine, L-2,4-Diaminobutyric acid, hypotaurine and nipecotic acid. Taurine transport is inhibited by hypotaurine, beta-alanine and nipecotic acid. In terms of biological role, mediates sodium- and chloride-dependent transport of gamma-aminobutyric acid (GABA). Mediates transport of taurine and is the major taurine transporter in hepatocytes. Can also mediate transport of beta-alanine and hypotaurine. This is Sodium- and chloride-dependent GABA transporter 2 (Slc6a13) from Rattus norvegicus (Rat).